The primary structure comprises 147 residues: 3-dehydroquinate dehydratase (147 aa).

Tyrosine 23 functions as the Proton acceptor in the catalytic mechanism. Substrate is bound by residues asparagine 74, histidine 80, and aspartate 87. Histidine 100 (proton donor) is an active-site residue. Residues 101 to 102 (IS) and arginine 111 each bind substrate.

The protein belongs to the type-II 3-dehydroquinase family. As to quaternary structure, homododecamer.

The enzyme catalyses 3-dehydroquinate = 3-dehydroshikimate + H2O. It functions in the pathway metabolic intermediate biosynthesis; chorismate biosynthesis; chorismate from D-erythrose 4-phosphate and phosphoenolpyruvate: step 3/7. Functionally, catalyzes a trans-dehydration via an enolate intermediate. This Bacillus pumilus (strain SAFR-032) protein is 3-dehydroquinate dehydratase.